Here is a 288-residue protein sequence, read N- to C-terminus: ATP synthase gamma chain (288 aa).

This sequence belongs to the ATPase gamma chain family. F-type ATPases have 2 components, CF(1) - the catalytic core - and CF(0) - the membrane proton channel. CF(1) has five subunits: alpha(3), beta(3), gamma(1), delta(1), epsilon(1). CF(0) has three main subunits: a, b and c.

The protein localises to the cell membrane. In terms of biological role, produces ATP from ADP in the presence of a proton gradient across the membrane. The gamma chain is believed to be important in regulating ATPase activity and the flow of protons through the CF(0) complex. This Staphylococcus aureus (strain bovine RF122 / ET3-1) protein is ATP synthase gamma chain.